Consider the following 73-residue polypeptide: Large ribosomal subunit protein bL31 (73 aa).

Positions 16, 18, 36, and 39 each coordinate Zn(2+).

The protein belongs to the bacterial ribosomal protein bL31 family. Type A subfamily. As to quaternary structure, part of the 50S ribosomal subunit. Zn(2+) serves as cofactor.

Its function is as follows. Binds the 23S rRNA. This chain is Large ribosomal subunit protein bL31, found in Citrifermentans bemidjiense (strain ATCC BAA-1014 / DSM 16622 / JCM 12645 / Bem) (Geobacter bemidjiensis).